The sequence spans 323 residues: Octaprenyl diphosphate synthase (323 aa).

Positions 45, 48, and 77 each coordinate isopentenyl diphosphate. Mg(2+)-binding residues include Asp84 and Asp88. Position 93 (Arg93) interacts with an all-trans-polyprenyl diphosphate. Arg94 lines the isopentenyl diphosphate pocket. Lys170, Thr171, and Gln208 together coordinate an all-trans-polyprenyl diphosphate.

This sequence belongs to the FPP/GGPP synthase family. Requires Mg(2+) as cofactor.

It catalyses the reaction 5 isopentenyl diphosphate + (2E,6E)-farnesyl diphosphate = all-trans-octaprenyl diphosphate + 5 diphosphate. Its function is as follows. Supplies octaprenyl diphosphate, the precursor for the side chain of the isoprenoid quinones ubiquinone and menaquinone. This Escherichia coli (strain K12) protein is Octaprenyl diphosphate synthase (ispB).